The primary structure comprises 379 residues: Glutamate 5-kinase (379 aa).

Lys20 provides a ligand contact to ATP. Substrate-binding residues include Ser59, Asp146, and Asn158. 220-226 (SGGMYSK) contributes to the ATP binding site. A PUA domain is found at 285-362 (TGSVVVDDGA…AELTAILGDN (78 aa)).

It belongs to the glutamate 5-kinase family.

It localises to the cytoplasm. The enzyme catalyses L-glutamate + ATP = L-glutamyl 5-phosphate + ADP. It participates in amino-acid biosynthesis; L-proline biosynthesis; L-glutamate 5-semialdehyde from L-glutamate: step 1/2. Catalyzes the transfer of a phosphate group to glutamate to form L-glutamate 5-phosphate. The chain is Glutamate 5-kinase from Oleidesulfovibrio alaskensis (strain ATCC BAA-1058 / DSM 17464 / G20) (Desulfovibrio alaskensis).